Consider the following 514-residue polypeptide: Carboxysome shell carbonic anhydrase (514 aa).

Residues 1–144 are N-terminal domain; sequence MNTRNTRSKQ…LTAATEQFSR (144 aa). The segment at 151–397 is catalytic domain; the sequence is DDSASAIGFF…GRYPPNDIGH (247 aa). C173 serves as a coordination point for Zn(2+). Catalysis depends on D175, which acts as the Proton acceptor. Zn(2+) contacts are provided by H242 and C253. A C-terminal domain region spans residues 398–514; it reads AERYISVGDG…GSPIEEVASA (117 aa).

Belongs to the beta-class carbonic anhydrase family. CsoSCA subfamily. In terms of assembly, homodimer, may form filaments. Zn(2+) is required as a cofactor.

The protein resides in the carboxysome. The catalysed reaction is hydrogencarbonate + H(+) = CO2 + H2O. Carbonic anhydrase activity is inhibited by ethoxyzolamide, dithiothreitol, cyanide, and divalent metal chelators dipicolinic acid and nitrilotriacetic acid. Functionally, reversible hydration of carbon dioxide. Essential for chemolithotrophic carbon dioxide fixation, supplies CO(2) to RuBisCO (ribulose bisphosphate carboxylase, cbbL-cbbS) in the carboxysome. There are estimated to be 40 CsoSCA dimers per carboxysome. Its function is as follows. Unlike beta-carboxysomes, alpha-carboxysomes (Cb) can form without cargo protein. CsoS2 is essential for Cb formation and is also capable of targeting foreign proteins to the Cb. The Cb shell assembles with the aid of CsoS2; CsoS1A, CsoS1B and CsoS1C form the majority of the shell while CsoS4A and CsoS4B form vertices. CsoS1D forms pseudohexamers that probably control metabolite flux into and out of the shell. The polypeptide is Carboxysome shell carbonic anhydrase (Halothiobacillus neapolitanus (strain ATCC 23641 / c2) (Thiobacillus neapolitanus)).